Reading from the N-terminus, the 412-residue chain is Imidazolonepropionase (412 aa).

Residues H73 and H75 each contribute to the Fe(3+) site. H73 and H75 together coordinate Zn(2+). Positions 82, 145, and 178 each coordinate 4-imidazolone-5-propanoate. Y145 serves as a coordination point for N-formimidoyl-L-glutamate. Position 247 (H247) interacts with Fe(3+). H247 lines the Zn(2+) pocket. Residue Q250 coordinates 4-imidazolone-5-propanoate. D322 provides a ligand contact to Fe(3+). A Zn(2+)-binding site is contributed by D322. Positions 324 and 326 each coordinate N-formimidoyl-L-glutamate. S327 serves as a coordination point for 4-imidazolone-5-propanoate.

Belongs to the metallo-dependent hydrolases superfamily. HutI family. Requires Zn(2+) as cofactor. The cofactor is Fe(3+).

Its subcellular location is the cytoplasm. It carries out the reaction 4-imidazolone-5-propanoate + H2O = N-formimidoyl-L-glutamate. It functions in the pathway amino-acid degradation; L-histidine degradation into L-glutamate; N-formimidoyl-L-glutamate from L-histidine: step 3/3. Catalyzes the hydrolytic cleavage of the carbon-nitrogen bond in imidazolone-5-propanoate to yield N-formimidoyl-L-glutamate. It is the third step in the universal histidine degradation pathway. The chain is Imidazolonepropionase from Shewanella amazonensis (strain ATCC BAA-1098 / SB2B).